Here is a 124-residue protein sequence, read N- to C-terminus: UPF0102 protein HEAR0176 (124 aa).

This sequence belongs to the UPF0102 family.

In Herminiimonas arsenicoxydans, this protein is UPF0102 protein HEAR0176.